Reading from the N-terminus, the 473-residue chain is Photosystem II CP43 reaction center protein (473 aa).

Residues 1-14 constitute a propeptide that is removed on maturation; that stretch reads MKTLYSLRRFYHVE. N-acetylthreonine is present on T15. The residue at position 15 (T15) is a Phosphothreonine. 5 helical membrane-spanning segments follow: residues 69–93, 134–155, 178–200, 255–275, and 291–312; these read LFEV…PHLA, LLGP…KDRN, KAFY…RKIT, KPFA…LSYS, and WFNN…ASQA. E367 provides a ligand contact to [CaMn4O5] cluster. Residues 447–471 traverse the membrane as a helical segment; sequence RARAAAAGFEKGIDRDFEPVLSMTP.

It belongs to the PsbB/PsbC family. PsbC subfamily. In terms of assembly, PSII is composed of 1 copy each of membrane proteins PsbA, PsbB, PsbC, PsbD, PsbE, PsbF, PsbH, PsbI, PsbJ, PsbK, PsbL, PsbM, PsbT, PsbX, PsbY, PsbZ, Psb30/Ycf12, at least 3 peripheral proteins of the oxygen-evolving complex and a large number of cofactors. It forms dimeric complexes. Binds multiple chlorophylls and provides some of the ligands for the Ca-4Mn-5O cluster of the oxygen-evolving complex. It may also provide a ligand for a Cl- that is required for oxygen evolution. PSII binds additional chlorophylls, carotenoids and specific lipids. serves as cofactor.

Its subcellular location is the plastid. The protein localises to the chloroplast thylakoid membrane. Its function is as follows. One of the components of the core complex of photosystem II (PSII). It binds chlorophyll and helps catalyze the primary light-induced photochemical processes of PSII. PSII is a light-driven water:plastoquinone oxidoreductase, using light energy to abstract electrons from H(2)O, generating O(2) and a proton gradient subsequently used for ATP formation. The sequence is that of Photosystem II CP43 reaction center protein from Pisum sativum (Garden pea).